The following is a 42-amino-acid chain: MKNFQIYLSTAPVLAAVWFTVLAGILIELNRFFPDALSFPLT.

The chain crosses the membrane as a helical span at residues 7-27 (YLSTAPVLAAVWFTVLAGILI).

The protein belongs to the PsaJ family.

The protein localises to the plastid. It is found in the chloroplast thylakoid membrane. Its function is as follows. May help in the organization of the PsaE and PsaF subunits. The protein is Photosystem I reaction center subunit IX of Ostreococcus tauri.